Reading from the N-terminus, the 877-residue chain is MDTVGTDAAAASINERRFAQSTSPKVSVKSQDSLFLITYSNMQQTVVQASLADRYPSLKKLNILLYIDIPTIDYYNDEMTHNKLSRLNKRFKLHRLRNSIAQSFSNTSTAEDNDKFWEELKSLISSRSTPENKFDLNVLVSSSGSLRYVETIRFLVEKLFNSFKDLYVQKKLNLCFQINVSPTSLKWFSTFLNAELLNLKIINWQNIGSFTKTIQNSKSLPFKEYYTKLNEKFTGSNQSNGSMQDQTVLDSIVIVTNSTGVKALLTLLSDHPLTSLISQESIKALHEYSDAVNEDKGDDQSNTSLKRNSSSLLNFQNSVLTSNKDKSVRIRSLSINRKSNRAHMFKTNESITTIPSTSINNLIGQESNLRKQPSGTALHLQSHLHPHSRSQSYSSSNMSRSPSPFPYGKTPSNDELVYDELNNQINEVQDRAKNEEIVLYNNNNYDDYTKERGEQEQDRTSYADEYGFNYDDEEGGNEDNYDDDEDDDDDDDDDDESDDEGLSFYAPSILSRSGSSTDVLSSGIDSMAKNSKETRGRFRSLSLMDPALQKPFNQKFPNSQQPDSAGASSPKRSTSSNHFTNVYVHDGDFDGTDTINNKKNLSSATLIKRKSLMNRNLAPSISNGLIPPEFISRISTPSTSASSSNSSLNDMSTVSNAFSKLLNDTSKKQKFLNSPIPQHTQQASPLLMRNNSNSNLLFEKNLINKSFEELRRQPSVNLFSTLMNGNMEKNGLALNFKSRTPTDALMANSIKNSNNSSHRLLNLEEEDQIMSGSLPKEREDDNDSTNSTIVPNHPDNDNYNDNDNDNNTGINSNNFNLNLYDDNDSAGFTDVTTEGVKYSNSNSTVTKPVYKKAVTLDLYGEDDMDNMGGWVLGGNAR.

Residues Ser-309, Ser-310, Ser-311, Ser-332, and Ser-334 each carry the phosphoserine modification. Disordered regions lie at residues 369–414 (LRKQ…PSND), 446–521 (DDYT…DVLS), and 550–579 (KPFNQKFPNSQQPDSAGASSPKRSTSSNHF). Over residues 389 to 402 (RSQSYSSSNMSRSP) the composition is skewed to low complexity. Positions 412–441 (SNDELVYDELNNQINEVQDRAKNEEIVLYN) form a coiled coil. Basic and acidic residues predominate over residues 447-462 (DYTKERGEQEQDRTSY). Residues 470–501 (YDDEEGGNEDNYDDDEDDDDDDDDDDESDDEG) show a composition bias toward acidic residues. Polar residues-rich tracts occupy residues 510–521 (LSRSGSSTDVLS) and 551–579 (PFNQKFPNSQQPDSAGASSPKRSTSSNHF). Residues Lys-668 and Lys-670 each participate in a glycyl lysine isopeptide (Lys-Gly) (interchain with G-Cter in ubiquitin) cross-link. Phosphoserine occurs at positions 692, 694, and 706. Residues 773-815 (SLPKEREDDNDSTNSTIVPNHPDNDNYNDNDNDNNTGINSNNF) form a disordered region. Low complexity predominate over residues 805 to 815 (DNNTGINSNNF). Ser-841 carries the post-translational modification Phosphoserine.

Interacts with ENV10/SND2.

It localises to the cytoplasm. Functions in the SND pathway, a SRP (signal recognition particle) and GET (guided entry of tail-anchored proteins) independent pathway for targeting a broad range of substrate proteins to the endoplasmic reticulum. SND functions in parallel to GET in targeting proteins with downstream hydrophobic motifs. This chain is SRP-independent targeting protein 1, found in Saccharomyces cerevisiae (strain ATCC 204508 / S288c) (Baker's yeast).